The chain runs to 187 residues: Superoxide dismutase [Cu-Zn] (187 aa).

The first 21 residues, 1–21, serve as a signal peptide directing secretion; sequence MSLLPTGTLILLVLFILVLIT. Cu cation-binding residues include histidine 76, histidine 78, and histidine 93. Cysteine 87 and cysteine 176 are oxidised to a cystine. Residues histidine 93, histidine 101, histidine 110, and aspartate 113 each coordinate Zn(2+). Histidine 150 provides a ligand contact to Cu cation.

Belongs to the Cu-Zn superoxide dismutase family. The cofactor is Cu cation. Zn(2+) serves as cofactor.

The enzyme catalyses 2 superoxide + 2 H(+) = H2O2 + O2. Destroys radicals which are normally produced within the cells and which are toxic to biological systems. This Chlorella (PBCV-1) protein is Superoxide dismutase [Cu-Zn].